The sequence spans 60 residues: MENNKTSYSWLGKFTTVKQECPTCGNESPEYLKECPHCGGLKCNHCDMGDDTACMNCEGE.

It is found in the host cytoplasm. This is an uncharacterized protein from Escherichia phage Mu (Bacteriophage Mu).